The following is a 124-amino-acid chain: MAFDKDAFLTALDSMTVLELNDLVKAIEEKFGVSAAAMAAPGAGAGAAAAVVEEKTEFNVVLLDAGAQKVSVIKAVRELTGLGLKEAKDLVDGAPKNVKEGIAKADAEAALKKLLEAGAKAEIK.

Belongs to the bacterial ribosomal protein bL12 family. As to quaternary structure, homodimer. Part of the ribosomal stalk of the 50S ribosomal subunit. Forms a multimeric L10(L12)X complex, where L10 forms an elongated spine to which 2 to 4 L12 dimers bind in a sequential fashion. Binds GTP-bound translation factors.

Its function is as follows. Forms part of the ribosomal stalk which helps the ribosome interact with GTP-bound translation factors. Is thus essential for accurate translation. The chain is Large ribosomal subunit protein bL12 from Leptothrix cholodnii (strain ATCC 51168 / LMG 8142 / SP-6) (Leptothrix discophora (strain SP-6)).